A 346-amino-acid polypeptide reads, in one-letter code: Hydroxymethylglutaryl-CoA synthase (346 aa).

Asp-28 is a binding site for (3S)-3-hydroxy-3-methylglutaryl-CoA. Glu-80 functions as the Proton donor/acceptor in the catalytic mechanism. The (3S)-3-hydroxy-3-methylglutaryl-CoA site is built by Cys-112 and Thr-153. Catalysis depends on Cys-112, which acts as the Acyl-thioester intermediate. Arg-199 is a CoA binding site. (3S)-3-hydroxy-3-methylglutaryl-CoA-binding residues include Thr-201 and His-234. His-234 (proton donor/acceptor) is an active-site residue. Lys-239 provides a ligand contact to CoA. 3 residues coordinate (3S)-3-hydroxy-3-methylglutaryl-CoA: Lys-243, Asn-266, and Ser-296.

The protein belongs to the thiolase-like superfamily. Archaeal HMG-CoA synthase family. In terms of assembly, interacts with acetoacetyl-CoA thiolase that catalyzes the precedent step in the pathway and with a DUF35 protein. The acetoacetyl-CoA thiolase/HMG-CoA synthase complex channels the intermediate via a fused CoA-binding site, which allows for efficient coupling of the endergonic thiolase reaction with the exergonic HMGCS reaction.

It carries out the reaction acetoacetyl-CoA + acetyl-CoA + H2O = (3S)-3-hydroxy-3-methylglutaryl-CoA + CoA + H(+). The protein operates within metabolic intermediate biosynthesis; (R)-mevalonate biosynthesis; (R)-mevalonate from acetyl-CoA: step 2/3. In terms of biological role, catalyzes the condensation of acetyl-CoA with acetoacetyl-CoA to form 3-hydroxy-3-methylglutaryl-CoA (HMG-CoA). Functions in the mevalonate (MVA) pathway leading to isopentenyl diphosphate (IPP), a key precursor for the biosynthesis of isoprenoid compounds that are building blocks of archaeal membrane lipids. The polypeptide is Hydroxymethylglutaryl-CoA synthase (Methanothermobacter thermautotrophicus (strain ATCC 29096 / DSM 1053 / JCM 10044 / NBRC 100330 / Delta H) (Methanobacterium thermoautotrophicum)).